A 33-amino-acid chain; its full sequence is Photosystem II reaction center protein Psb30 (33 aa).

A helical transmembrane segment spans residues 5 to 25 (ILAQLTALAFIVVSGPLVIAL).

The protein belongs to the Psb30/Ycf12 family. As to quaternary structure, PSII is composed of 1 copy each of membrane proteins PsbA, PsbB, PsbC, PsbD, PsbE, PsbF, PsbH, PsbI, PsbJ, PsbK, PsbL, PsbM, PsbT, PsbX, PsbY, PsbZ, Psb30/Ycf12, peripheral proteins of the oxygen-evolving complex and a large number of cofactors. It forms dimeric complexes.

The protein resides in the plastid. Its subcellular location is the chloroplast thylakoid membrane. In terms of biological role, a core subunit of photosystem II (PSII), probably helps stabilize the reaction center. In Chaetosphaeridium globosum (Charophycean green alga), this protein is Photosystem II reaction center protein Psb30.